The sequence spans 133 residues: Small ribosomal subunit protein uS8 (133 aa).

Belongs to the universal ribosomal protein uS8 family. Part of the 30S ribosomal subunit. Contacts proteins S5 and S12.

One of the primary rRNA binding proteins, it binds directly to 16S rRNA central domain where it helps coordinate assembly of the platform of the 30S subunit. The sequence is that of Small ribosomal subunit protein uS8 from Lachnoclostridium phytofermentans (strain ATCC 700394 / DSM 18823 / ISDg) (Clostridium phytofermentans).